The sequence spans 126 residues: Putative lipoprotein LprD (126 aa).

Positions 1 to 21 are cleaved as a signal peptide; the sequence is MSTTRRRRPALIALVIIATCG. A lipid anchor (N-palmitoyl cysteine) is attached at C22. C22 carries the S-diacylglycerol cysteine lipid modification. The chain crosses the membrane as a helical span at residues 40–60; that stretch reads FQNLGYALQWPLFAWFCVYAY. The segment at 70 to 101 is disordered; sequence PPQPPTGGAAAEIPAGLLPERPKPAQQPPDDP.

To M.leprae ML1177.

Its subcellular location is the cell membrane. This is Putative lipoprotein LprD (lprD) from Mycobacterium tuberculosis (strain CDC 1551 / Oshkosh).